The sequence spans 60 residues: MAQIKITLTKSPIGRKPEQRKTVKALGLGKLNSSVIKEDNAAMRGMVTAISHLVTVEEVK.

It belongs to the universal ribosomal protein uL30 family. Part of the 50S ribosomal subunit.

The protein is Large ribosomal subunit protein uL30 of Streptococcus uberis (strain ATCC BAA-854 / 0140J).